Consider the following 400-residue polypeptide: Argininosuccinate synthase (400 aa).

9 to 17 (AYSGGLDTS) contacts ATP. Y87 serves as a coordination point for L-citrulline. G117 serves as a coordination point for ATP. Positions 119, 123, and 124 each coordinate L-aspartate. N123 contributes to the L-citrulline binding site. The L-citrulline site is built by R127, S176, S185, E261, and Y273.

This sequence belongs to the argininosuccinate synthase family. Type 1 subfamily. Homotetramer.

It localises to the cytoplasm. The catalysed reaction is L-citrulline + L-aspartate + ATP = 2-(N(omega)-L-arginino)succinate + AMP + diphosphate + H(+). The protein operates within amino-acid biosynthesis; L-arginine biosynthesis; L-arginine from L-ornithine and carbamoyl phosphate: step 2/3. The protein is Argininosuccinate synthase of Pelodictyon phaeoclathratiforme (strain DSM 5477 / BU-1).